Consider the following 348-residue polypeptide: Pheromone P-factor receptor (348 aa).

The next 7 helical transmembrane spans lie at 46–69 (LLTGMTLSAQLALGVLTILMVCLL), 79–103 (VFVFNSASIVAMCLRAILNIVTICS), 125–141 (VFNILILLLAPVIIFTA), 162–180 (IMTVISACLTVLVLAFWIT), 207–225 (YFIAKILFAFSIIFHSGVF), 249–267 (CILVISCQCLIVPATFTII), and 283–301 (CLLIISLPLSSLWASSTAL).

The protein belongs to the G-protein coupled receptor 4 family.

It localises to the membrane. In terms of biological role, receptor for the peptide pheromone P-factor, a mating factor of S.pombe. Pheromone signaling is essential for initiation of meiosis in S.pombe; P-factor signaling alone may be sufficient. This is Pheromone P-factor receptor (mam2) from Schizosaccharomyces pombe (strain 972 / ATCC 24843) (Fission yeast).